Reading from the N-terminus, the 126-residue chain is Glycine cleavage system H protein (126 aa).

The 83-residue stretch at V22–E104 folds into the Lipoyl-binding domain. K63 is modified (N6-lipoyllysine).

The protein belongs to the GcvH family. In terms of assembly, the glycine cleavage system is composed of four proteins: P, T, L and H. (R)-lipoate serves as cofactor.

The glycine cleavage system catalyzes the degradation of glycine. The H protein shuttles the methylamine group of glycine from the P protein to the T protein. In terms of biological role, is also involved in protein lipoylation via its role as an octanoyl/lipoyl carrier protein intermediate. This chain is Glycine cleavage system H protein, found in Staphylococcus epidermidis (strain ATCC 12228 / FDA PCI 1200).